Here is a 152-residue protein sequence, read N- to C-terminus: UPF0756 membrane protein EF_1246 (152 aa).

The next 4 helical transmembrane spans lie at 4-24, 52-72, 85-105, and 115-135; these read WLFL…SLLI, LGVT…QIGL, WLGI…VGLI, and LVFG…GPII.

This sequence belongs to the UPF0756 family.

The protein resides in the cell membrane. This Enterococcus faecalis (strain ATCC 700802 / V583) protein is UPF0756 membrane protein EF_1246.